Consider the following 154-residue polypeptide: Ubiquitin-conjugating enzyme E2 L5 (154 aa).

A UBC core domain is found at 2–149 (AASRRLMKEL…AEEFTKKYGE (148 aa)). Cys86 functions as the Glycyl thioester intermediate in the catalytic mechanism.

It belongs to the ubiquitin-conjugating enzyme family.

It catalyses the reaction S-ubiquitinyl-[E1 ubiquitin-activating enzyme]-L-cysteine + [E2 ubiquitin-conjugating enzyme]-L-cysteine = [E1 ubiquitin-activating enzyme]-L-cysteine + S-ubiquitinyl-[E2 ubiquitin-conjugating enzyme]-L-cysteine.. The protein operates within protein modification; protein ubiquitination. Functionally, catalyzes the covalent attachment of ubiquitin to other proteins. The protein is Ubiquitin-conjugating enzyme E2 L5 of Homo sapiens (Human).